A 363-amino-acid chain; its full sequence is Phosphoserine aminotransferase (363 aa).

R42 contributes to the L-glutamate binding site. Residues 76 to 77 (GR), W102, T156, D175, and Q198 each bind pyridoxal 5'-phosphate. K199 bears the N6-(pyridoxal phosphate)lysine mark. 240-241 (NT) contributes to the pyridoxal 5'-phosphate binding site.

Belongs to the class-V pyridoxal-phosphate-dependent aminotransferase family. SerC subfamily. Homodimer. It depends on pyridoxal 5'-phosphate as a cofactor.

It localises to the cytoplasm. It catalyses the reaction O-phospho-L-serine + 2-oxoglutarate = 3-phosphooxypyruvate + L-glutamate. The catalysed reaction is 4-(phosphooxy)-L-threonine + 2-oxoglutarate = (R)-3-hydroxy-2-oxo-4-phosphooxybutanoate + L-glutamate. It functions in the pathway amino-acid biosynthesis; L-serine biosynthesis; L-serine from 3-phospho-D-glycerate: step 2/3. Its pathway is cofactor biosynthesis; pyridoxine 5'-phosphate biosynthesis; pyridoxine 5'-phosphate from D-erythrose 4-phosphate: step 3/5. Its function is as follows. Catalyzes the reversible conversion of 3-phosphohydroxypyruvate to phosphoserine and of 3-hydroxy-2-oxo-4-phosphonooxybutanoate to phosphohydroxythreonine. The polypeptide is Phosphoserine aminotransferase (Shewanella sp. (strain MR-7)).